The chain runs to 444 residues: MPKTYHFIGIKGSGMSALALMLHQMGHKVQGSDVEKYYFTQRGLEQAGITILPFDEKNLDGDMEIIAGNAFRPDNNVEIAYADQNGISYKRYHEFLGSFMRDFVSMGVAGAHGKTSTTGMLSHVLSHITDTSFLIGDGTGRGSANAKYFVFESDEYERHFMPYHPEYSIITNIDFDHPDYFTSLEDVFNAFNDYAKQITKGLFVYGEDAELRKITSDAPIYYYGFEAEGNDFVASDLLRSTTGSTFTVHFRGQNLGQFHIPTFGRHNIMNATAVIGLLYTAGFDLNLVREHLKTFSGVKRRFTEKIVNDTVIIDDFAHHPTEIIATLDAARQKYPSKEIVAVFQPHTFTRTIALLDDFAHALNQADAVYLAQIYGSAREVDHGDVKVEDLANKINKKHQVITVENVSPLLDHDNAVYVFMGAGDIQTYEYSFERLLSNLTSNVQ.

110-116 (GAHGKTS) is an ATP binding site.

Belongs to the MurCDEF family.

It localises to the cytoplasm. The enzyme catalyses UDP-N-acetyl-alpha-D-muramate + L-alanine + ATP = UDP-N-acetyl-alpha-D-muramoyl-L-alanine + ADP + phosphate + H(+). The protein operates within cell wall biogenesis; peptidoglycan biosynthesis. Functionally, cell wall formation. The sequence is that of UDP-N-acetylmuramate--L-alanine ligase from Streptococcus pneumoniae (strain Hungary19A-6).